Consider the following 110-residue polypeptide: Evasin P1166 (110 aa).

Positions Met1–Ala24 are cleaved as a signal peptide. Intrachain disulfides connect Cys45–Cys67, Cys49–Cys69, and Cys60–Cys80. Residue Asn48 is glycosylated (N-linked (GlcNAc...) asparagine). A disordered region spans residues Ser89–His110.

Its subcellular location is the secreted. Salivary chemokine-binding protein which binds to host chemokines CXCL1, CXCL2 and CXCL8. The sequence is that of Evasin P1166 from Ixodes ricinus (Common tick).